We begin with the raw amino-acid sequence, 207 residues long: Pyridoxal 5'-phosphate synthase subunit PdxT (207 aa).

51–53 lines the L-glutamine pocket; it reads GES. The active-site Nucleophile is Cys-83. L-glutamine contacts are provided by residues Arg-112 and 143-144; that span reads IR. Catalysis depends on charge relay system residues His-184 and Glu-186.

The protein belongs to the glutaminase PdxT/SNO family. In terms of assembly, in the presence of PdxS, forms a dodecamer of heterodimers. Only shows activity in the heterodimer.

The catalysed reaction is aldehydo-D-ribose 5-phosphate + D-glyceraldehyde 3-phosphate + L-glutamine = pyridoxal 5'-phosphate + L-glutamate + phosphate + 3 H2O + H(+). The enzyme catalyses L-glutamine + H2O = L-glutamate + NH4(+). The protein operates within cofactor biosynthesis; pyridoxal 5'-phosphate biosynthesis. Catalyzes the hydrolysis of glutamine to glutamate and ammonia as part of the biosynthesis of pyridoxal 5'-phosphate. The resulting ammonia molecule is channeled to the active site of PdxS. In Kineococcus radiotolerans (strain ATCC BAA-149 / DSM 14245 / SRS30216), this protein is Pyridoxal 5'-phosphate synthase subunit PdxT.